Reading from the N-terminus, the 272-residue chain is 2-amino-3,7-dideoxy-D-threo-hept-6-ulosonate synthase (272 aa).

Catalysis depends on Asp-33, which acts as the Proton acceptor. Residues Asp-33–Ser-37 and Tyr-153–Arg-155 each bind 1-deoxy-D-threo-hexo-2,5-diulose 6-phosphate. Tyr-153 functions as the Proton donor in the catalytic mechanism. The active-site Schiff-base intermediate with substrate is Lys-184. 1-deoxy-D-threo-hexo-2,5-diulose 6-phosphate-binding positions include Gly-209–Gly-210 and Gly-237–Arg-238.

Belongs to the DeoC/FbaB aldolase family. ADHS subfamily. In terms of assembly, homodecamer.

The catalysed reaction is 1-deoxy-D-threo-hexo-2,5-diulose 6-phosphate + L-aspartate 4-semialdehyde = 2,3-dioxopropyl phosphate + 2-amino-2,3,7-trideoxy-D-lyxo-hept-6-ulosonate. Its function is as follows. Catalyzes a transaldol reaction between 6-deoxy-5-ketofructose 1-phosphate (DKFP) and L-aspartate semialdehyde (ASA) with an elimination of hydroxypyruvaldehyde phosphate to yield 2-amino-3,7-dideoxy-D-threo-hept-6-ulosonate (ADH). Plays a key role in an alternative pathway of the biosynthesis of 3-dehydroquinate (DHQ), which is involved in the canonical pathway for the biosynthesis of aromatic amino acids. This chain is 2-amino-3,7-dideoxy-D-threo-hept-6-ulosonate synthase, found in Methanococcus maripaludis (strain C7 / ATCC BAA-1331).